The chain runs to 203 residues: Sporulation delaying protein C (203 aa).

The signal sequence occupies residues 1 to 32 (MKSKLLRLLIVSMVTILVFSLVGLSKESSTSA). A propeptide spans 33-140 (KENHTFSGED…KYSSNKVTPS (108 aa)) (removed in mature form). Residues Cys-141 and Cys-147 are joined by a disulfide bond. Positions 183 to 203 (SASNNSDLEAAAAKTLKLIHQ) are cleaved as a propeptide — removed in mature form.

Proprotein probably interacts with chaperone CsaA. Production of active SDP (able to induce SdpI and kill cells) is a multi-step process that requires signal peptide cleavage (probably by SipS or SipT) as well as SdpA and SdpB. The disulfide bond is not required for maximum toxicity.

The protein resides in the secreted. Its function is as follows. Produces a 42-residue extracellular sporulation delaying protein (SDP) that collapses the proton motive force (probably both the membrane potential and pH gradient) across the cell membrane, which leads to autolysis; may form a proton channel. Induces the lysis of other B.subtilis cells that have not entered the sporulation pathway, inducing cannibalism to provide a source of nutrients to support sporulation, and at the same time delaying commitment to the energetically expensive and irreversible onset of sporulation. Addition of SDP to liquid cultures halts growth, leads to increased cell permeability and eventually cell lysis in a significant subset of the population, although some cells survive and resume growth after a lag period. Effects of SDP are irreversible within 10 minutes. Addition of SDP to solid cultures induces killing, it is much more effective than SKF (AC O31422). Has antibiotic action against Gram-positive Firmicutes (L.acidophilus, M.megaterium, P.polymyxa, S.aureus, S.epidermidis) but not Actinobacteria M.luteus or Gram-negative P.aeruginosa or K.pneumoniae. SDP induces expression of the sdpR-sdpI operon. Its maturation is dependent on SdpA and SdpB. Also functions as a ligand, binds to SdpI triggering a signal transduction cascade that protects the cell against the toxic effects of its own SDP. This chain is Sporulation delaying protein C, found in Bacillus subtilis (strain 168).